Consider the following 338-residue polypeptide: Homocysteine S-methyltransferase 3 (338 aa).

In terms of domain architecture, Hcy-binding spans 12 to 326 (AVRRWVDAAG…NTIRAIHRTL (315 aa)). Zn(2+)-binding residues include C244, C311, and C312.

As to quaternary structure, monomer. Zn(2+) serves as cofactor.

The enzyme catalyses S-methyl-L-methionine + L-homocysteine = 2 L-methionine + H(+). Functionally, catalyzes methyl transfer from S-methylmethionine (SMM) to adenosyl-L-homocysteine (AdoMet). SMM degradation (by HMT-1, HMT-2, HMT-3 and HMT-4) and biosynthesis (by MMT1) constitute the SMM cycle in plants, which is probably required to achieve short term control of AdoMet level. This chain is Homocysteine S-methyltransferase 3 (HMT-3), found in Zea mays (Maize).